Reading from the N-terminus, the 717-residue chain is Patatin-like phospholipase domain-containing protein AO090003000839 (717 aa).

A helical membrane pass occupies residues 87-107 (WPFLFIVFGWITVLGFAYALT). The region spanning 277 to 468 (LCLSGGATFA…RTDIPIRALN (192 aa)) is the PNPLA domain. The short motif at 308 to 312 (GTSGG) is the GXSXG element. Ser310 acts as the Nucleophile in catalysis. Residue Asp455 is the Proton acceptor of the active site. Residues 620–696 (VSPAQSRRKR…STGNIFQEMR (77 aa)) form a disordered region. The span at 639 to 658 (MVERLDHNLPDRQPDNKEDL) shows a compositional bias: basic and acidic residues. Residues 660–673 (DSSGIDSNVSSRDS) are compositionally biased toward low complexity.

It belongs to the PLPL family.

It is found in the membrane. In terms of biological role, probable lipid hydrolase. The chain is Patatin-like phospholipase domain-containing protein AO090003000839 from Aspergillus oryzae (strain ATCC 42149 / RIB 40) (Yellow koji mold).